A 70-amino-acid polypeptide reads, in one-letter code: ATP synthase subunit c (70 aa).

Helical transmembrane passes span 4–24 (IAAAIAIGLGALGAGIGNGLI) and 45–65 (LMFIGVALVEALPIIAVVIAF).

This sequence belongs to the ATPase C chain family. F-type ATPases have 2 components, F(1) - the catalytic core - and F(0) - the membrane proton channel. F(1) has five subunits: alpha(3), beta(3), gamma(1), delta(1), epsilon(1). F(0) has three main subunits: a(1), b(2) and c(10-14). The alpha and beta chains form an alternating ring which encloses part of the gamma chain. F(1) is attached to F(0) by a central stalk formed by the gamma and epsilon chains, while a peripheral stalk is formed by the delta and b chains.

It is found in the cell membrane. Its function is as follows. F(1)F(0) ATP synthase produces ATP from ADP in the presence of a proton or sodium gradient. F-type ATPases consist of two structural domains, F(1) containing the extramembraneous catalytic core and F(0) containing the membrane proton channel, linked together by a central stalk and a peripheral stalk. During catalysis, ATP synthesis in the catalytic domain of F(1) is coupled via a rotary mechanism of the central stalk subunits to proton translocation. Key component of the F(0) channel; it plays a direct role in translocation across the membrane. A homomeric c-ring of between 10-14 subunits forms the central stalk rotor element with the F(1) delta and epsilon subunits. The chain is ATP synthase subunit c from Bacillus licheniformis (strain ATCC 14580 / DSM 13 / JCM 2505 / CCUG 7422 / NBRC 12200 / NCIMB 9375 / NCTC 10341 / NRRL NRS-1264 / Gibson 46).